The following is a 274-amino-acid chain: 2-dehydro-3-deoxyphosphooctonate aldolase (274 aa).

Belongs to the KdsA family.

It is found in the cytoplasm. It carries out the reaction D-arabinose 5-phosphate + phosphoenolpyruvate + H2O = 3-deoxy-alpha-D-manno-2-octulosonate-8-phosphate + phosphate. Its pathway is carbohydrate biosynthesis; 3-deoxy-D-manno-octulosonate biosynthesis; 3-deoxy-D-manno-octulosonate from D-ribulose 5-phosphate: step 2/3. It functions in the pathway bacterial outer membrane biogenesis; lipopolysaccharide biosynthesis. This is 2-dehydro-3-deoxyphosphooctonate aldolase from Legionella pneumophila (strain Lens).